Reading from the N-terminus, the 426-residue chain is MRILIENVSVFQEGDILNNKNILIENDIIKEISEDKNFEKIDYVIEGKNKIALPGLVNTHTHLAMTLFRGFADDLPLKEWLEEKIWPQEAKLTAEDVYWGSLLGICEMIKGGTIAFADMYFFMDEVAKAVSESGVKASLSVGMIGVSGNENEILNRGVNFAQNWHNAENGRIKVMLAPHAPYTCPPSFLEKVINKAVEMNLSIHTHLSETYLEVENIKNIYGLTPVRLMDRIGLFNVPVLAAHCVFVDDEEIEILSEKGVGVAHNPQSNLKLASGVAPVKKMVEKRVKIGLGTDGPASNNNLDLWEEIRLVATLHKGVEKDPVCIPAKEALNMATKNGMEILGFENSGIIKEGYKADLILVNINKPHFYPRHNLISHLVYSALSSDVDTVIVDGKVLMEKRELKILDEEKIMFEAEKRAFDLIKKR.

The Zn(2+) site is built by H60 and H62. Positions 89 and 179 each coordinate substrate. H206 lines the Zn(2+) pocket. Substrate-binding residues include E209 and D294. Position 294 (D294) interacts with Zn(2+).

The protein belongs to the metallo-dependent hydrolases superfamily. MTA/SAH deaminase family. The cofactor is Zn(2+).

It carries out the reaction S-adenosyl-L-homocysteine + H2O + H(+) = S-inosyl-L-homocysteine + NH4(+). The enzyme catalyses S-methyl-5'-thioadenosine + H2O + H(+) = S-methyl-5'-thioinosine + NH4(+). Catalyzes the deamination of 5-methylthioadenosine and S-adenosyl-L-homocysteine into 5-methylthioinosine and S-inosyl-L-homocysteine, respectively. Is also able to deaminate adenosine. The sequence is that of 5-methylthioadenosine/S-adenosylhomocysteine deaminase from Dictyoglomus turgidum (strain DSM 6724 / Z-1310).